Here is a 309-residue protein sequence, read N- to C-terminus: Enoyl-CoA hydratase 2, peroxisomal (309 aa).

Substrate-binding positions include 95-96 (HG), K124, 208-213 (DYNPLH), G231, and F261. A MaoC-like domain is found at 183–295 (PQRQPLTVCE…TKVKERNKTV (113 aa)). Residues 307-309 (SSL) carry the Microbody targeting signal motif.

As to expression, ubiquitous.

Its subcellular location is the peroxisome. The enzyme catalyses a (3R)-3-hydroxyacyl-CoA = a (2E)-enoyl-CoA + H2O. It participates in lipid metabolism; fatty acid beta-oxidation. In terms of biological role, bidirectional monofunctional enoyl-CoA hydratase 2 involved in the degradation of even cis-unsaturated fatty acids. Devoid of 3-hydroxyacyl-CoA dehydrogenase activity. The polypeptide is Enoyl-CoA hydratase 2, peroxisomal (ECH2) (Arabidopsis thaliana (Mouse-ear cress)).